The chain runs to 440 residues: Cytochrome c biogenesis protein Ccs1 (440 aa).

Helical transmembrane passes span 19-39, 78-98, and 164-184; these read LRLA…GTFI, NIWF…CTYT, and VGPI…ACGA.

The protein belongs to the Ccs1/CcsB family. As to quaternary structure, may interact with CcsA.

It is found in the plastid. Its subcellular location is the chloroplast thylakoid membrane. Its function is as follows. Required during biogenesis of c-type cytochromes (cytochrome c6 and cytochrome f) at the step of heme attachment. The protein is Cytochrome c biogenesis protein Ccs1 of Emiliania huxleyi (Coccolithophore).